The following is a 172-amino-acid chain: NADH-quinone oxidoreductase subunit B 1 (172 aa).

[4Fe-4S] cluster contacts are provided by Cys-42, Cys-43, Cys-107, and Cys-137.

This sequence belongs to the complex I 20 kDa subunit family. As to quaternary structure, NDH-1 is composed of 14 different subunits. Subunits NuoB, C, D, E, F, and G constitute the peripheral sector of the complex. Requires [4Fe-4S] cluster as cofactor.

It is found in the cell inner membrane. It carries out the reaction a quinone + NADH + 5 H(+)(in) = a quinol + NAD(+) + 4 H(+)(out). Its function is as follows. NDH-1 shuttles electrons from NADH, via FMN and iron-sulfur (Fe-S) centers, to quinones in the respiratory chain. Couples the redox reaction to proton translocation (for every two electrons transferred, four hydrogen ions are translocated across the cytoplasmic membrane), and thus conserves the redox energy in a proton gradient. This is NADH-quinone oxidoreductase subunit B 1 from Anaeromyxobacter sp. (strain Fw109-5).